Here is a 34-residue protein sequence, read N- to C-terminus: Omega-ctenitoxin-Pn2a (34 aa).

Cystine bridges form between C2–C16, C9–C26, and C15–C28.

This sequence belongs to the neurotoxin 02 (plectoxin) family. 01 (Tx3) subfamily. Expressed by the venom gland.

Its subcellular location is the secreted. Functionally, inhibits all known high-voltage activated calcium channels (L-, P/Q- and R-type currents) (Cav), and most effectively the P/Q- (Cav2.1/CACNA1A) and R-type (Cav2.3/CACNA1E) currents. In rat brain, inhibits glutamate release, neuronal death and loss of neurotransmission in the hippocampus resulting from ischemia. In vivo, induces rapid general flaccid paralysis followed by death in 10-30 minutes at dose levels of 5 ug per mouse. The protein is Omega-ctenitoxin-Pn2a of Phoneutria nigriventer (Brazilian armed spider).